Reading from the N-terminus, the 347-residue chain is Acetylglutamate kinase, chloroplastic (347 aa).

The N-terminal 50 residues, M1–A50, are a transit peptide targeting the chloroplast. T51 is modified (N-acetylthreonine). G94–A95 lines the ATP pocket. N-acetyl-L-glutamate-binding positions include G126, R148, and N242–A245. K260 contributes to the L-arginine binding site. ATP contacts are provided by residues T265–D266 and L271. K282 provides a ligand contact to L-arginine. K297–K305 lines the ATP pocket. Residues E334–S337 and G342 contribute to the L-arginine site.

It belongs to the acetylglutamate kinase family. ArgB subfamily. As to quaternary structure, interacts with GLB1. Interaction is dependent of MgATP and inhibited by 2-oxoglutarate, arginine, glutamate, citrate, and oxaloacetate.

It is found in the plastid. The protein localises to the chloroplast stroma. It catalyses the reaction N-acetyl-L-glutamate + ATP = N-acetyl-L-glutamyl 5-phosphate + ADP. It participates in amino-acid biosynthesis; L-arginine biosynthesis; N(2)-acetyl-L-ornithine from L-glutamate: step 2/4. Inhibited by arginine. Inhibition is relieved by binding to GLB1. In terms of biological role, involved in the arginine biosynthetic pathway via the intermediate compound ornithine. This Arabidopsis thaliana (Mouse-ear cress) protein is Acetylglutamate kinase, chloroplastic.